Reading from the N-terminus, the 432-residue chain is D-amino acid dehydrogenase (432 aa).

3-17 (VVILGSGVVGVASAW) is a binding site for FAD.

It belongs to the DadA oxidoreductase family. Requires FAD as cofactor.

The catalysed reaction is a D-alpha-amino acid + A + H2O = a 2-oxocarboxylate + AH2 + NH4(+). The protein operates within amino-acid degradation; D-alanine degradation; NH(3) and pyruvate from D-alanine: step 1/1. Its function is as follows. Oxidative deamination of D-amino acids. This Shigella boydii serotype 18 (strain CDC 3083-94 / BS512) protein is D-amino acid dehydrogenase.